A 441-amino-acid polypeptide reads, in one-letter code: ATP-dependent protease ATPase subunit HslU (441 aa).

ATP is bound by residues Ile18, 60 to 65 (GVGKTE), Asp254, Glu319, and Arg391.

This sequence belongs to the ClpX chaperone family. HslU subfamily. A double ring-shaped homohexamer of HslV is capped on each side by a ring-shaped HslU homohexamer. The assembly of the HslU/HslV complex is dependent on binding of ATP.

It localises to the cytoplasm. Functionally, ATPase subunit of a proteasome-like degradation complex; this subunit has chaperone activity. The binding of ATP and its subsequent hydrolysis by HslU are essential for unfolding of protein substrates subsequently hydrolyzed by HslV. HslU recognizes the N-terminal part of its protein substrates and unfolds these before they are guided to HslV for hydrolysis. This is ATP-dependent protease ATPase subunit HslU from Actinobacillus succinogenes (strain ATCC 55618 / DSM 22257 / CCUG 43843 / 130Z).